Consider the following 357-residue polypeptide: Intracellular hyaluronan-binding protein 4 (357 aa).

3 disordered regions span residues 56 to 116 (VVAR…HKTA), 150 to 186 (ERPRGCGRGRGGMQGRGRGGGINKSFDGFDQRGKREF), and 313 to 357 (PGCG…PALT). Basic and acidic residues predominate over residues 96 to 115 (PKQEECGGKDNSRAEKEHKT). A compositionally biased stretch (gly residues) spans 155-171 (CGRGRGGMQGRGRGGGI). Over residues 176–186 (DGFDQRGKREF) the composition is skewed to basic and acidic residues. A compositionally biased stretch (acidic residues) spans 348-357 (DDPEDFPALT).

Belongs to the SERBP1-HABP4 family. In terms of assembly, associates with ribosomes; promoting ribosome stabilization. Interacts with EEF2/eEF2; promoting ribosome stabilization.

It localises to the nucleus. The protein localises to the cytoplasm. It is found in the stress granule. Its subcellular location is the sarcoplasm. The protein resides in the nuclear body. It localises to the nucleolus. The protein localises to the nucleus speckle. It is found in the cajal body. Its subcellular location is the gem. In terms of biological role, ribosome-binding protein that promotes ribosome hibernation, a process during which ribosomes are stabilized in an inactive state and preserved from proteasomal degradation. Acts via its association with EEF2/eEF2 factor at the A-site of the ribosome, promoting ribosome stabilization in an inactive state compatible with storage. Plays a key role in ribosome hibernation in the mature egg by promoting ribosome stabilization. Ribosomes, which are produced in large quantities during oogenesis, are stored and translationally repressed in the egg and early embryo. This Gallus gallus (Chicken) protein is Intracellular hyaluronan-binding protein 4.